The primary structure comprises 650 residues: Probable acyl-CoA dehydrogenase FadE10 (650 aa).

The tract at residues M1–G23 is disordered. The span at E10–G23 shows a compositional bias: basic and acidic residues. E422 serves as the catalytic Proton acceptor.

Belongs to the acyl-CoA dehydrogenase family. The cofactor is FAD.

The catalysed reaction is a 2,3-saturated acyl-CoA + A = a 2,3-dehydroacyl-CoA + AH2. The sequence is that of Probable acyl-CoA dehydrogenase FadE10 (fadE10) from Mycobacterium tuberculosis (strain CDC 1551 / Oshkosh).